We begin with the raw amino-acid sequence, 153 residues long: Endoribonuclease YbeY (153 aa).

His116, His120, and His126 together coordinate Zn(2+).

This sequence belongs to the endoribonuclease YbeY family. It depends on Zn(2+) as a cofactor.

The protein resides in the cytoplasm. Its function is as follows. Single strand-specific metallo-endoribonuclease involved in late-stage 70S ribosome quality control and in maturation of the 3' terminus of the 16S rRNA. This is Endoribonuclease YbeY from Clavibacter sepedonicus (Clavibacter michiganensis subsp. sepedonicus).